The following is a 727-amino-acid chain: 1,4-alpha-glucan branching enzyme GlgB (727 aa).

Aspartate 405 (nucleophile) is an active-site residue. The Proton donor role is filled by glutamate 458.

It belongs to the glycosyl hydrolase 13 family. GlgB subfamily. Monomer.

The catalysed reaction is Transfers a segment of a (1-&gt;4)-alpha-D-glucan chain to a primary hydroxy group in a similar glucan chain.. It participates in glycan biosynthesis; glycogen biosynthesis. Its function is as follows. Catalyzes the formation of the alpha-1,6-glucosidic linkages in glycogen by scission of a 1,4-alpha-linked oligosaccharide from growing alpha-1,4-glucan chains and the subsequent attachment of the oligosaccharide to the alpha-1,6 position. The sequence is that of 1,4-alpha-glucan branching enzyme GlgB from Yersinia pseudotuberculosis serotype O:1b (strain IP 31758).